A 196-amino-acid chain; its full sequence is Putative HTH-type transcriptional regulator in exeN 3'region (196 aa).

Residues 120–185 (ASVGGDRLTR…ELFNLFLNHL (66 aa)) form the HTH luxR-type domain. The segment at residues 144 to 163 (TEAIAAALGIGNGTVKNHRK) is a DNA-binding region (H-T-H motif).

The protein is Putative HTH-type transcriptional regulator in exeN 3'region of Aeromonas salmonicida.